The chain runs to 760 residues: uncharacterized protein (760 aa).

An N-terminal signal peptide occupies residues 1–23 (MVIKKGFFALSSCTLGLGLILTA). Residue cysteine 24 is the site of N-palmitoyl cysteine attachment. Residue cysteine 24 is the site of S-diacylglycerol cysteine attachment. Disordered regions lie at residues 220–262 (ANGK…NSDN) and 443–482 (YEIKAPTNSQNGNGTLLGSFTKSKSNGKEQSGQDEDNQTS). Polar residues-rich tracts occupy residues 222–257 (GKTTSTQTSPQPKNAVSSLQLKQAAEGTSTDNSQDA) and 448–472 (PTNSQNGNGTLLGSFTKSKSNGKEQ).

This sequence belongs to the MG185/MG260 family.

The protein localises to the cell membrane. This is an uncharacterized protein from Mycoplasma pneumoniae (strain ATCC 29342 / M129 / Subtype 1) (Mycoplasmoides pneumoniae).